The chain runs to 598 residues: Integrator complex subunit 11 (598 aa).

His-68, His-70, Asp-72, His-73, His-157, and Asp-178 together coordinate Zn(2+). Positions 68–73 (HFHLDH) match the HXHXDH motif motif. Glu-203 is an active-site residue. Zn(2+) is bound at residue His-414. Positions 470–480 (PLPDAKRPRTM) match the Nuclear localization signal motif.

It belongs to the metallo-beta-lactamase superfamily. RNA-metabolizing metallo-beta-lactamase-like family. INTS11 subfamily. As to quaternary structure, component of the Integrator complex, composed of core subunits INTS1, INTS2, INTS3, INTS4, INTS5, INTS6, INTS7, INTS8, INTS9/RC74, INTS10, INTS11/CPSF3L, INTS12, INTS13, INTS14 and INTS15. The core complex associates with protein phosphatase 2A subunits PPP2CA and PPP2R1A, to form the Integrator-PP2A (INTAC) complex. INTS11 is part of the RNA endonuclease subcomplex, composed of INTS4, INTS9, INTS11 and inositol hexakisphosphate (InsP6). Zn(2+) is required as a cofactor.

Its subcellular location is the nucleus. It is found in the cytoplasm. RNA endonuclease component of the integrator complex, a multiprotein complex that terminates RNA polymerase II (Pol II) transcription in the promoter-proximal region of genes. The integrator complex provides a quality checkpoint during transcription elongation by driving premature transcription termination of transcripts that are unfavorably configured for transcriptional elongation: the complex terminates transcription by (1) catalyzing dephosphorylation of the C-terminal domain (CTD) of Pol II subunit POLR2A/RPB1 and SUPT5H/SPT5, (2) degrading the exiting nascent RNA transcript via endonuclease activity and (3) promoting the release of Pol II from bound DNA. The integrator complex is also involved in terminating the synthesis of non-coding Pol II transcripts, such as enhancer RNAs (eRNAs), small nuclear RNAs (snRNAs), telomerase RNAs and long non-coding RNAs (lncRNAs). Within the integrator complex, INTS11 constitutes the RNA endonuclease subunit that degrades exiting nascent RNA transcripts. In Danio rerio (Zebrafish), this protein is Integrator complex subunit 11 (cpsf3l).